The chain runs to 264 residues: Eukaryotic translation initiation factor 6 (264 aa).

It belongs to the eIF-6 family. As to quaternary structure, monomer. Associates with the 60S ribosomal subunit.

Its subcellular location is the cytoplasm. The protein localises to the nucleus. It localises to the nucleolus. In terms of biological role, binds to the 60S ribosomal subunit and prevents its association with the 40S ribosomal subunit to form the 80S initiation complex in the cytoplasm. May also be involved in ribosome biogenesis. The protein is Eukaryotic translation initiation factor 6 of Toxoplasma gondii (strain ATCC 50861 / VEG).